The following is a 181-amino-acid chain: Probable mitochondrial import inner membrane translocase subunit tim-17B.1 (181 aa).

3 consecutive transmembrane segments (helical) span residues 17-37 (IGSAFAMGLVGGSIFQAFGGY), 61-81 (GVQFAAWGGMFSTIDCCLVAI), and 109-129 (VMAGSAILGSVILAMIEGVGL). The interval 137-181 (AMMDPTQPPPEALDDPRSLGQKSQAEPGLDQTRPFGIPTGLPNLS) is disordered.

It belongs to the Tim17/Tim22/Tim23 family.

It localises to the mitochondrion inner membrane. In terms of biological role, essential component of the TIM23 complex, a complex that mediates the translocation of transit peptide-containing proteins across the mitochondrial inner membrane. The polypeptide is Probable mitochondrial import inner membrane translocase subunit tim-17B.1 (Caenorhabditis elegans).